The chain runs to 630 residues: 1-deoxy-D-xylulose-5-phosphate synthase (630 aa).

Thiamine diphosphate is bound by residues histidine 72 and 113 to 115; that span reads GHS. Aspartate 144 contacts Mg(2+). Thiamine diphosphate is bound by residues 145 to 146, asparagine 173, tyrosine 284, and glutamate 367; that span reads GA. Asparagine 173 serves as a coordination point for Mg(2+).

The protein belongs to the transketolase family. DXPS subfamily. In terms of assembly, homodimer. Mg(2+) is required as a cofactor. It depends on thiamine diphosphate as a cofactor.

It carries out the reaction D-glyceraldehyde 3-phosphate + pyruvate + H(+) = 1-deoxy-D-xylulose 5-phosphate + CO2. It functions in the pathway metabolic intermediate biosynthesis; 1-deoxy-D-xylulose 5-phosphate biosynthesis; 1-deoxy-D-xylulose 5-phosphate from D-glyceraldehyde 3-phosphate and pyruvate: step 1/1. Functionally, catalyzes the acyloin condensation reaction between C atoms 2 and 3 of pyruvate and glyceraldehyde 3-phosphate to yield 1-deoxy-D-xylulose-5-phosphate (DXP). The protein is 1-deoxy-D-xylulose-5-phosphate synthase of Bacillus cereus (strain ATCC 10987 / NRS 248).